Reading from the N-terminus, the 118-residue chain is Large ribosomal subunit protein bL19 (118 aa).

It belongs to the bacterial ribosomal protein bL19 family.

In terms of biological role, this protein is located at the 30S-50S ribosomal subunit interface and may play a role in the structure and function of the aminoacyl-tRNA binding site. The polypeptide is Large ribosomal subunit protein bL19 (Levilactobacillus brevis (strain ATCC 367 / BCRC 12310 / CIP 105137 / JCM 1170 / LMG 11437 / NCIMB 947 / NCTC 947) (Lactobacillus brevis)).